A 702-amino-acid chain; its full sequence is uncharacterized protein (702 aa).

5 stretches are compositionally biased toward low complexity: residues 306–384, 488–511, 559–590, 603–612, and 621–639; these read NNNN…NNNN, PTKT…TNIT, QQSQ…NNNN, and SNQNSNNNNQ. 3 disordered regions span residues 306 to 385, 488 to 513, and 551 to 645; these read NNNN…NNNE, PTKT…ITYG, and STMN…NSRY. Positions 337-489 constitute a VPS9 domain; the sequence is NNINNNINNN…IKSLDILSPT (153 aa).

This is an uncharacterized protein from Dictyostelium discoideum (Social amoeba).